We begin with the raw amino-acid sequence, 158 residues long: Transcription elongation factor GreA (158 aa).

The stretch at 45-72 forms a coiled coil; sequence AEYHAAREQQSFIEGRIKQLEGELSHAE.

Belongs to the GreA/GreB family.

Its function is as follows. Necessary for efficient RNA polymerase transcription elongation past template-encoded arresting sites. The arresting sites in DNA have the property of trapping a certain fraction of elongating RNA polymerases that pass through, resulting in locked ternary complexes. Cleavage of the nascent transcript by cleavage factors such as GreA or GreB allows the resumption of elongation from the new 3'terminus. GreA releases sequences of 2 to 3 nucleotides. The polypeptide is Transcription elongation factor GreA (Xanthomonas campestris pv. campestris (strain ATCC 33913 / DSM 3586 / NCPPB 528 / LMG 568 / P 25)).